A 122-amino-acid polypeptide reads, in one-letter code: UPF0102 protein RHECIAT_CH0000358 (122 aa).

This sequence belongs to the UPF0102 family.

The polypeptide is UPF0102 protein RHECIAT_CH0000358 (Rhizobium etli (strain CIAT 652)).